A 544-amino-acid chain; its full sequence is Chaperonin GroEL 1 (544 aa).

ATP is bound by residues Thr30–Pro33, Lys51, Asp87–Thr91, Gly415, Asp481–Leu483, and Asp497.

This sequence belongs to the chaperonin (HSP60) family. As to quaternary structure, forms a cylinder of 14 subunits composed of two heptameric rings stacked back-to-back. Interacts with the co-chaperonin GroES.

Its subcellular location is the cytoplasm. It catalyses the reaction ATP + H2O + a folded polypeptide = ADP + phosphate + an unfolded polypeptide.. In terms of biological role, together with its co-chaperonin GroES, plays an essential role in assisting protein folding. The GroEL-GroES system forms a nano-cage that allows encapsulation of the non-native substrate proteins and provides a physical environment optimized to promote and accelerate protein folding. In Chlamydia pneumoniae (Chlamydophila pneumoniae), this protein is Chaperonin GroEL 1.